Here is a 309-residue protein sequence, read N- to C-terminus: Dehydrogenase/reductase SDR family member 7B (309 aa).

Topologically, residues 1–4 are cytoplasmic; sequence MDLT. A helical; Signal-anchor for type II membrane protein membrane pass occupies residues 5-25; that stretch reads TWAIFPLLLGSIGVYSLYKLL. Residues 26–272 are Lumenal-facing; it reads QRLRSGAYLQ…AVGERRKELL (247 aa). NAD(+)-binding residues include serine 46 and leucine 48. Serine 178 provides a ligand contact to substrate. Tyrosine 191, lysine 195, and threonine 226 together coordinate NAD(+). Tyrosine 191 serves as the catalytic Proton acceptor.

It belongs to the short-chain dehydrogenases/reductases (SDR) family.

The protein resides in the endoplasmic reticulum membrane. Its function is as follows. Putative oxidoreductase. In Xenopus tropicalis (Western clawed frog), this protein is Dehydrogenase/reductase SDR family member 7B (dhrs7b).